Reading from the N-terminus, the 562-residue chain is Protoporphyrinogen oxidase 1, chloroplastic (562 aa).

The N-terminal 48 residues, 1–48 (MSAMALSSTMALSLPQSSMSLSHCRHNRITILIPSSSLRRRGGSSIRC), are a transit peptide targeting the chloroplast. FAD-binding positions include 88–93 (GGGISG), 115–116 (EA), and 137–140 (GPNS). The disordered stretch occupies residues 274–302 (TLKTIQERKDNPKPPRDPRLPKPKGQTVG). Residues 278–293 (IQERKDNPKPPRDPRL) show a composition bias toward basic and acidic residues. FAD is bound by residues valine 323 and 536–538 (VAL).

The protein belongs to the protoporphyrinogen/coproporphyrinogen oxidase family. Protoporphyrinogen oxidase subfamily. The cofactor is FAD.

Its subcellular location is the plastid. It localises to the chloroplast thylakoid membrane. The protein resides in the chloroplast inner membrane. The catalysed reaction is protoporphyrinogen IX + 3 O2 = protoporphyrin IX + 3 H2O2. It participates in porphyrin-containing compound metabolism; protoporphyrin-IX biosynthesis; protoporphyrin-IX from protoporphyrinogen-IX: step 1/1. Its pathway is porphyrin-containing compound metabolism; chlorophyll biosynthesis. Functionally, catalyzes the 6-electron oxidation of protoporphyrinogen-IX to form protoporphyrin-IX. The polypeptide is Protoporphyrinogen oxidase 1, chloroplastic (Spinacia oleracea (Spinach)).